Here is a 725-residue protein sequence, read N- to C-terminus: Phosphatase and actin regulator 4A (725 aa).

The segment covering 1-12 (MGQGASTQTLNP) has biased composition (polar residues). A disordered region spans residues 1-597 (MGQGASTQTL…SSTWNNKEQW (597 aa)). Residues 55 to 64 (KPWKWRKKKT) are compositionally biased toward basic residues. Basic and acidic residues-rich tracts occupy residues 65–100 (SDKFKETSEGLVLERKMSVRKPREELIERGLLKDIP), 124–147 (GDRKSDSGSEIDQDRRMDDTGERK), and 155–164 (KRNDGTERMT). An RPEL 1 repeat occupies 75 to 100 (LVLERKMSVRKPREELIERGLLKDIP). The span at 166-177 (MIQSFQKMSLMQ) shows a compositional bias: polar residues. The segment covering 212-221 (VIAAPSSAEP) has biased composition (low complexity). A compositionally biased stretch (pro residues) spans 222 to 235 (APVPPPPIAKPPPR). 2 stretches are compositionally biased toward low complexity: residues 265-276 (PAHTTPATVSTH) and 292-313 (PAHVTTPAAPAHSNPPAVLLKQ). A compositionally biased stretch (polar residues) spans 359 to 368 (TPVTKRNSGD). Positions 374–384 (PEPPPPAPTSV) are enriched in pro residues. A compositionally biased stretch (low complexity) spans 385–401 (PIPAAAPISAPPSTQSD). Positions 402–417 (PPSPTTEPPSQPPPLP) are enriched in pro residues. Over residues 497–510 (QKPELEPRSRRGLV) the composition is skewed to basic and acidic residues. 2 stretches are compositionally biased toward acidic residues: residues 522 to 536 (AGSESSEEEEDESDS) and 545 to 554 (DNEEDDDEED). The span at 567 to 585 (KDTLALKLERQQEKEKSQE) shows a compositional bias: basic and acidic residues. RPEL repeat units lie at residues 606 to 631 (TALTRRLSQRPTAQELEQRNILLAKN) and 644 to 669 (RRLTRKLSQRPTIADLQARKILRFHE).

The protein belongs to the phosphatase and actin regulator family. In terms of assembly, binds ppp1ca and actin.

The protein localises to the cytoplasm. It localises to the cell projection. Its subcellular location is the lamellipodium. In terms of biological role, regulator of protein phosphatase 1 (PP1) required for neural tube and optic fissure closure, and enteric neural crest cell (ENCCs) migration during development. Acts as an activator of PP1. During neural tube closure, localizes to the ventral neural tube and activates PP1, leading to down-regulate cell proliferation within cranial neural tissue and the neural retina. Also acts as a regulator of migration of enteric neural crest cells (ENCCs) by activating PP1, leading to repression of the integrin signaling through the rho/rock pathway. The protein is Phosphatase and actin regulator 4A (phactr4a) of Danio rerio (Zebrafish).